Here is a 264-residue protein sequence, read N- to C-terminus: uncharacterized protein (264 aa).

A signal peptide spans Met1–Gly22. Cys23 is lipidated: N-palmitoyl cysteine. Cys23 is lipidated: S-diacylglycerol cysteine.

It belongs to the staphylococcal tandem lipoprotein family.

Its subcellular location is the cell membrane. This is an uncharacterized protein from Staphylococcus aureus (strain N315).